A 1364-amino-acid chain; its full sequence is Toxin subunit YenA2 (1364 aa).

A coiled-coil region spans residues 1025 to 1080; it reads SESYRRRRQEWELQYKQAEWEVNSVEQQINLQNMQIKAANKRLEQVEAQQQQAMAL.

As to quaternary structure, semipurified toxin complex consists of at least YenA1-YenA2-YenB-YenC1-YenC2-Chi1-Chi2. The Yen-TC:K9 subcomplex is about 26 nm tall and 22 nm in diameter with 5-fold symmetry and 5 copies of YenA1, YenA2, Chi1 and Chi2; the chitinase subunits may be solvent accessible on the exterior the complex. The Yen-TC:K9 subcomplex has no insecticidal activity. The native complex with additional YenB, YenC1 and YenC2 subunits is 16 nm taller and is insecticidal; the toxicity-conferring subunits are present at about 1 copy each. In terms of processing, the isolated toxin complex includes 3 peptides starting between residues 768 and 778 of this protein, which might be physiologically relevant.

It is found in the secreted. Functionally, part of an orally active toxin complex (TC) with strong insecticidal effects on larvae of the Coleoptera Costelytra zealandica, Acrossidius tasmania and Adoryphorus couloni and some Lepidoptera larvae. The TC has an endochitinase activity. The chain is Toxin subunit YenA2 from Yersinia entomophaga.